A 795-amino-acid chain; its full sequence is Outer membrane protein assembly factor BamA (795 aa).

An N-terminal signal peptide occupies residues 1 to 19 (MKKLLIASLLFGTTTTVFA). POTRA domains follow at residues 22–89 (FVAK…VVAK), 90–170 (SIIS…INED), 173–259 (AKLA…VNEG), 262–341 (YDLR…VDAG), and 344–418 (LTVR…VKER).

This sequence belongs to the BamA family. Part of the Bam complex.

The protein localises to the cell outer membrane. Its function is as follows. Part of the outer membrane protein assembly complex, which is involved in assembly and insertion of beta-barrel proteins into the outer membrane. The sequence is that of Outer membrane protein assembly factor BamA from Haemophilus influenzae (strain ATCC 51907 / DSM 11121 / KW20 / Rd).